We begin with the raw amino-acid sequence, 252 residues long: Imidazole glycerol phosphate synthase subunit HisF (252 aa).

Residues Asp11 and Asp130 contribute to the active site.

The protein belongs to the HisA/HisF family. As to quaternary structure, heterodimer of HisH and HisF.

It localises to the cytoplasm. The catalysed reaction is 5-[(5-phospho-1-deoxy-D-ribulos-1-ylimino)methylamino]-1-(5-phospho-beta-D-ribosyl)imidazole-4-carboxamide + L-glutamine = D-erythro-1-(imidazol-4-yl)glycerol 3-phosphate + 5-amino-1-(5-phospho-beta-D-ribosyl)imidazole-4-carboxamide + L-glutamate + H(+). The protein operates within amino-acid biosynthesis; L-histidine biosynthesis; L-histidine from 5-phospho-alpha-D-ribose 1-diphosphate: step 5/9. Its function is as follows. IGPS catalyzes the conversion of PRFAR and glutamine to IGP, AICAR and glutamate. The HisF subunit catalyzes the cyclization activity that produces IGP and AICAR from PRFAR using the ammonia provided by the HisH subunit. The chain is Imidazole glycerol phosphate synthase subunit HisF from Thermococcus kodakarensis (strain ATCC BAA-918 / JCM 12380 / KOD1) (Pyrococcus kodakaraensis (strain KOD1)).